We begin with the raw amino-acid sequence, 715 residues long: Coiled-coil domain-containing protein 13 (715 aa).

Coiled coils occupy residues 16 to 105 and 134 to 458; these read KAMQ…KERD and ATKI…NVHY. The segment at 20-65 is disordered; it reads EMQHKRLQKQMEKKREKELSLKSRADDQEEPLEVSDGLSLLHAGEP. A compositionally biased stretch (basic and acidic residues) spans 28–45; that stretch reads KQMEKKREKELSLKSRAD. A phosphoserine mark is found at Ser-258, Ser-469, and Ser-536. Disordered stretches follow at residues 482–541 and 607–645; these read EDPG…EQKG and LEPG…DPSF. Residues 554 to 608 are a coiled coil; sequence QAAEVERDRLTEFVTVLQKRVEESNSKLLESERKLQEERHRTVVLEQHLEKIRLE. Residues 625–637 show a composition bias toward polar residues; it reads GLPTSNNRHNPTG. Positions 653 to 683 form a coiled coil; it reads VESQMEELTTRLAIQVEENEMLKAALGSALR.

In terms of assembly, interacts with PCM1, CEP290 and PCNT.

Its subcellular location is the cytoplasm. The protein resides in the cytoskeleton. The protein localises to the microtubule organizing center. It is found in the centrosome. It localises to the centriolar satellite. Its subcellular location is the cilium basal body. In terms of biological role, required for primary cilia formation and promotes the localization of the ciliopathy protein BBS4 to both centriolar satellites and cilia. The chain is Coiled-coil domain-containing protein 13 from Homo sapiens (Human).